A 489-amino-acid polypeptide reads, in one-letter code: MKFIPEITLLLLLFVHSTQAKGKRRKCPEGAWSEGKIMNTIMSNYTKMLPDAEDSVQVNIEIHVQDMGSLNEISSDFEIDILFTQLWHDSALSFAHLPACKRNITMETRLLPKIWSPNTCMINSKRTTVHASPSENVMVILYENGTVWINHRLSVKSPCNLDLRQFPFDTQTCILIFESYSHNSEEVELHWMEEAVTLMKPIQLPDFDMVHYSTKKETLLYPNGYWDQLQVTFTFKRRYGFYIIQAYVPTYLTIIVSWVSFCMEPKALPARTTVGISSLLALTFQFGNILKNLPRVSYVKAMDVWMLGCISFVFGTMVELAFVCYISRCQNSVRNAERRRERMRNSQVWANGSCRTRSNGYANGGSVISHYHPTSNGNGNNNRHDTPQVTGRGSLHRNGPPSPLNLQMTTFDSEIPLTFDQLPVSMESDRPLIEEMRSTSPPPPSGCLARFHPEAVDKFSIVAFPLAFTMFNLVYWWHYLSQTFDQNYQ.

The signal sequence occupies residues 1–20 (MKFIPEITLLLLLFVHSTQA). Topologically, residues 21-240 (KGKRRKCPEG…VTFTFKRRYG (220 aa)) are extracellular. Asparagine 44, asparagine 103, and asparagine 144 each carry an N-linked (GlcNAc...) asparagine glycan. Tyrosine 180 and tryptophan 226 together coordinate serotonin. 3 helical membrane passes run 241-261 (FYIIQAYVPTYLTIIVSWVSF), 274-294 (VGISSLLALTFQFGNILKNLP), and 304-324 (VWMLGCISFVFGTMVELAFVC). Over 325–458 (YISRCQNSVR…ARFHPEAVDK (134 aa)) the chain is Cytoplasmic. The tract at residues 365–398 (GSVISHYHPTSNGNGNNNRHDTPQVTGRGSLHRN) is disordered. Polar residues predominate over residues 372 to 391 (HPTSNGNGNNNRHDTPQVTG). A helical membrane pass occupies residues 459–479 (FSIVAFPLAFTMFNLVYWWHY).

The protein belongs to the ligand-gated ion channel (TC 1.A.9) family. Expressed in a subset of muscles, and head and tail neurons, including RME and GABAergic ventral nerve cord neurons. Expressed in AIY, RME, RID, RIF, ASI, DD1-6, and PVN neurons.

The protein resides in the membrane. It is found in the cell membrane. Its function is as follows. Functions as a 5-hydroxytryptamine (serotonin) receptor. This receptor is a ligand-gated anion-specific ion channel, selective for chloride ions. Relays a long-range endocrine signal from the body cavity neurons to modulate distal adipose triglyceride lipase atgl-1 function, via the nuclear receptor nhr-76. Together with the G-protein coupled serotonin receptor ser-1 involved in male mating behavior. May mediate an inhibitory effect of serotonin on egg laying. Involved in regulating locomotory behavior, perhaps by modulating interneuronal signaling, acting in concert with G-protein coupled serotonin receptor ser-4. In the presence of food, plays a role in initiating and extending dwelling behavior, perhaps acting in AIY, RIF and ASI neurons, in opposition to neuropeptide PDF-mediated signaling. Plays a role in aversive learning upon exposure to pathogens such as Gram-negative bacterium P.aeruginosa strain PA14; perhaps acting in interneurons in response to serotonin released by the serotonergic ADF neurons. The protein is Serotonin-gated chloride channel mod-1 of Caenorhabditis elegans.